Consider the following 273-residue polypeptide: Large ribosomal subunit protein uL2 (273 aa).

Residues Val228–Lys273 are disordered. Positions Lys254–Lys273 are enriched in basic residues.

Belongs to the universal ribosomal protein uL2 family. In terms of assembly, part of the 50S ribosomal subunit. Forms a bridge to the 30S subunit in the 70S ribosome.

Its function is as follows. One of the primary rRNA binding proteins. Required for association of the 30S and 50S subunits to form the 70S ribosome, for tRNA binding and peptide bond formation. It has been suggested to have peptidyltransferase activity; this is somewhat controversial. Makes several contacts with the 16S rRNA in the 70S ribosome. The polypeptide is Large ribosomal subunit protein uL2 (Rickettsia massiliae (strain Mtu5)).